The following is a 495-amino-acid chain: Cytochrome P450 710A1 (495 aa).

Residues 5-25 (VSIFASLAPYLISAFLLFLLV) traverse the membrane as a helical segment. Cysteine 434 contributes to the heme binding site.

It belongs to the cytochrome P450 family. It depends on heme as a cofactor. In terms of tissue distribution, expressed in the vascular tissues of roots, shoots and leaves. Expressed in root tips and sepals. Very low expression in stems and siliques.

The protein localises to the membrane. It catalyses the reaction 5-dehydroepisterol + NADPH + O2 + H(+) = ergosta-5,7,22,24(28)-tetraen-3beta-ol + NADP(+) + 2 H2O. The protein operates within steroid biosynthesis; sterol biosynthesis. Required to form the C-22 double bond in the sterol side chain. Possesses in vitro C-22 desaturase activity toward beta-sitosterol and produces stigmasterol. No activity with campesterol. This Arabidopsis thaliana (Mouse-ear cress) protein is Cytochrome P450 710A1.